We begin with the raw amino-acid sequence, 438 residues long: MRISIFGLGYVGAVCAGCLSARGHDVVGVDISSTKIDLINNGKSPIVEPGLEELLQKGISTGKLRGTTDFAEAIRATDLSMICVGTPSKKNGDLELDYIESVCREIGYVLRDKATRHTIVVRSTVLPGTVANVVIPILEDCSGKKAGVDFGVAVNPEFLRESTAIKDYDLPPMTVIGEFDKASGDVLQSLYEELDAPIIRKDIAVAEMIKYTCNVWHATKVTFANEIGNIAKAVGVDGREVMDVVCQDKALNLSQYYMRPGFAFGGSCLPKDVRALTYRASSLDVEAPLLNSLMRSNTSQVQNAFDMVASYDTRKVALLGLSFKAGTDDLRESPLVELAEMLIGKGFDLSIFDSNVEYARVHGANKDYIESKIPHVSSLLNSDFDQVINDSDVIILGNRDERFRALANKTPEGKRVIDLVGFMTNATSEDGRAEGICW.

NAD(+) is bound by residues Y10, V11, D30, K35, T86, and T124. GDP-alpha-D-mannuronate-binding residues include E161, K210, N214, H217, N225, Y256, Y257, R259, F262, and G265. C268 is a catalytic residue. K271 provides a ligand contact to NAD(+). K324 is a GDP-alpha-D-mannuronate binding site. Residue R331 participates in NAD(+) binding.

The protein belongs to the UDP-glucose/GDP-mannose dehydrogenase family.

It carries out the reaction GDP-alpha-D-mannose + 2 NAD(+) + H2O = GDP-alpha-D-mannuronate + 2 NADH + 3 H(+). It participates in glycan biosynthesis; alginate biosynthesis. In terms of biological role, catalyzes the oxidation of guanosine diphospho-D-mannose (GDP-D-mannose) to GDP-D-mannuronic acid, a precursor for alginate polymerization. The alginate layer causes a mucoid phenotype and provides a protective barrier against host immune defenses and antibiotics. The polypeptide is GDP-mannose 6-dehydrogenase (algD) (Pseudomonas savastanoi pv. phaseolicola (Pseudomonas syringae pv. phaseolicola)).